Here is a 200-residue protein sequence, read N- to C-terminus: LHFPL tetraspan subfamily member 6 protein (200 aa).

Residues 1 to 23 form the signal peptide; the sequence is MASSLTCTGVIWALLSFLSAATS. Transmembrane regions (helical) follow at residues 84–104, 123–143, and 166–186; these read ICTI…LTAL, GIQF…PLGW, and IGWA…LCTW.

The protein belongs to the LHFP family.

It is found in the membrane. This Rattus norvegicus (Rat) protein is LHFPL tetraspan subfamily member 6 protein.